A 258-amino-acid polypeptide reads, in one-letter code: UDP-N-acetylenolpyruvoylglucosamine reductase (258 aa).

Residue arginine 142 is part of the active site. The active-site Proton donor is the serine 184. The active site involves glutamate 254.

It belongs to the MurB family. Requires FAD as cofactor.

The protein resides in the cytoplasm. The enzyme catalyses UDP-N-acetyl-alpha-D-muramate + NADP(+) = UDP-N-acetyl-3-O-(1-carboxyvinyl)-alpha-D-glucosamine + NADPH + H(+). Its pathway is cell wall biogenesis; peptidoglycan biosynthesis. Functionally, cell wall formation. This Campylobacter jejuni (strain RM1221) protein is UDP-N-acetylenolpyruvoylglucosamine reductase.